A 130-amino-acid chain; its full sequence is Small ribosomal subunit protein uS9 (130 aa).

It belongs to the universal ribosomal protein uS9 family. In terms of assembly, part of the 30S ribosomal subunit.

The chain is Small ribosomal subunit protein uS9 (rpsI) from Bacillus subtilis (strain 168).